The primary structure comprises 522 residues: FAD-dependent monooxygenase fsr3 (522 aa).

Positions 1–27 are disordered; sequence MKNTQTNGTHPIIDKKPNGTLNGDHQE. Arg164 lines the FAD pocket. Arg245 is an active-site residue. Positions 369 and 382 each coordinate FAD.

The protein belongs to the paxM FAD-dependent monooxygenase family. FAD serves as cofactor.

Its pathway is polyketide biosynthesis. In terms of biological role, FAD-dependent monooxygenase; part of the gene cluster that mediates the biosynthesis of fusarubins, highly pigmented naphthoquinones responsible for the coloration of the fruiting bodies. The non-reducing polyketide synthase FSR1 is responsible for the condensation of seven acetyl-CoA units to yield a haptaketide. After rings A and B are formed by aldol-type cyclization, the PKS-derived product is released as 6-O-demethylfusarubinaldehyde. Then, two hydroxyl groups at C-5 and C-10 are incorporated by FSR3, and simultaneously hydroxyl groups at C-6 and C-8 are methylated by FSR2. The aldehyde is, on the one hand, reduced by FSR3 to 8-O-methylfusarubin alcohol, which equilibrates mainly with 8-O-methylfusarubin and only small amounts of 8-O-methylnectriafurone. On the other hand, the aldehyde can be oxidized to form 8-O-methylfusarubinic acid, a reaction driven by FSR3 equilibrating with 8-O-methylfusarubinlactone, finally resulting in 8-O-methylanhydrofusarubinlactol after a further reduction step and loss of water. 8-O-Methylfusarubinic acid can also undergo decarboxylation, resulting in 8-O-methyl-13-hydroxynorjavanicin after another hydroxylation step at C-13. Both steps are most likely also accomplished by FSR3. No enzymatic function has been determined so far for either FSR4 and FSR5. Their deletion does not alter the product spectrum, but the possibility that they catalyze specific enzymatic steps during perithecium development cannot be ruled out. FSR4 might possess a regulatory function in the biosynthesis of fusarubins. The sequence is that of FAD-dependent monooxygenase fsr3 from Gibberella fujikuroi (strain CBS 195.34 / IMI 58289 / NRRL A-6831) (Bakanae and foot rot disease fungus).